Consider the following 499-residue polypeptide: Glutamyl-tRNA(Gln) amidotransferase subunit A (499 aa).

Active-site charge relay system residues include lysine 76 and serine 151. Serine 175 serves as the catalytic Acyl-ester intermediate.

This sequence belongs to the amidase family. GatA subfamily. Heterotrimer of A, B and C subunits.

It carries out the reaction L-glutamyl-tRNA(Gln) + L-glutamine + ATP + H2O = L-glutaminyl-tRNA(Gln) + L-glutamate + ADP + phosphate + H(+). Allows the formation of correctly charged Gln-tRNA(Gln) through the transamidation of misacylated Glu-tRNA(Gln) in organisms which lack glutaminyl-tRNA synthetase. The reaction takes place in the presence of glutamine and ATP through an activated gamma-phospho-Glu-tRNA(Gln). The chain is Glutamyl-tRNA(Gln) amidotransferase subunit A from Rhodopirellula baltica (strain DSM 10527 / NCIMB 13988 / SH1).